Consider the following 391-residue polypeptide: Argininosuccinate synthase (391 aa).

ATP is bound at residue 6 to 14 (AYSGGLDTT). Tyr84 contacts L-citrulline. Gly114 is a binding site for ATP. Residues Thr116, Asn120, and Asp121 each contribute to the L-aspartate site. Asn120 serves as a coordination point for L-citrulline. Residues Arg124, Ser171, Ser180, Glu253, and Tyr265 each contribute to the L-citrulline site.

The protein belongs to the argininosuccinate synthase family. Type 1 subfamily. In terms of assembly, homotetramer.

The protein resides in the cytoplasm. The catalysed reaction is L-citrulline + L-aspartate + ATP = 2-(N(omega)-L-arginino)succinate + AMP + diphosphate + H(+). It functions in the pathway amino-acid biosynthesis; L-arginine biosynthesis; L-arginine from L-ornithine and carbamoyl phosphate: step 2/3. This chain is Argininosuccinate synthase, found in Metallosphaera sedula (strain ATCC 51363 / DSM 5348 / JCM 9185 / NBRC 15509 / TH2).